Consider the following 93-residue polypeptide: HssA/B-like protein 26 (93 aa).

It belongs to the hssA/B family.

The protein is HssA/B-like protein 26 (hssl26) of Dictyostelium discoideum (Social amoeba).